A 385-amino-acid chain; its full sequence is Chaperone protein DnaJ (385 aa).

The 66-residue stretch at 3–68 folds into the J domain; sequence DYYEILGVTR…QKRAAYDRFG (66 aa). A CR-type zinc finger spans residues 135 to 213; it reads GAEVEITVPA…CHGHGQVRRE (79 aa). Positions 148, 151, 165, 168, 187, 190, 201, and 204 each coordinate Zn(2+). 4 CXXCXGXG motif repeats span residues 148–155, 165–172, 187–194, and 201–208; these read CEVCEGSG, CGTCGGAG, CPRCGGSG, and CSNCHGHG.

This sequence belongs to the DnaJ family. As to quaternary structure, homodimer. The cofactor is Zn(2+).

It localises to the cytoplasm. In terms of biological role, participates actively in the response to hyperosmotic and heat shock by preventing the aggregation of stress-denatured proteins and by disaggregating proteins, also in an autonomous, DnaK-independent fashion. Unfolded proteins bind initially to DnaJ; upon interaction with the DnaJ-bound protein, DnaK hydrolyzes its bound ATP, resulting in the formation of a stable complex. GrpE releases ADP from DnaK; ATP binding to DnaK triggers the release of the substrate protein, thus completing the reaction cycle. Several rounds of ATP-dependent interactions between DnaJ, DnaK and GrpE are required for fully efficient folding. Also involved, together with DnaK and GrpE, in the DNA replication of plasmids through activation of initiation proteins. In Caulobacter vibrioides (strain ATCC 19089 / CIP 103742 / CB 15) (Caulobacter crescentus), this protein is Chaperone protein DnaJ.